A 384-amino-acid chain; its full sequence is Sensor protein VanS (384 aa).

Helical transmembrane passes span 21–41 and 76–96; these read MYIV…RSMI and IDIF…RVML. The Histidine kinase domain maps to 161 to 376; that stretch reads YLAHDIKTPL…TFRVELPAMP (216 aa). Phosphohistidine; by autocatalysis is present on histidine 164. The interval 221-384 is involved in low-affinity ATP-binding. Exhibits higher affinity for ATP than GTP; it reads QTITLTKTHI…MPDLVDKRRS (164 aa).

Post-translationally, autophosphorylated.

It localises to the membrane. It catalyses the reaction ATP + protein L-histidine = ADP + protein N-phospho-L-histidine.. Its activity is regulated as follows. Phosphorylation of VanR inhibited by EDTA. In terms of biological role, member of the two-component regulatory system VanS/VanR. Functions as a sensor protein kinase which is autophosphorylated at a histidine residue in response to environmental stimuli, such as glycopeptide antibiotics. VanS transfers its phosphate group to transcriptional regulatory protein VanR, thereby modulating expression of target genes. Binds directly to, and autophosphorylation activity is enhanced by, the glycopeptides vancomycin and teicoplanin, in vitro. However it has also been reported that autophosphorylation, phosphate transfer to VanR and dephosphorylation of phospho-VanR are all unaffected by the presence of vancomycin, in vitro. In the absence of vancomycin, negatively regulates VanR-mediated activation of vanS, vanH, vanA and vanX, probably as a result of dephosphorylating phospho-VanR. May inhibit promoter-specific DNA binding by VanR. Involved in conferring vancomycin resistance. The polypeptide is Sensor protein VanS (Enterococcus faecium (Streptococcus faecium)).